The following is a 372-amino-acid chain: Heat-inducible transcription repressor HrcA (372 aa).

The interval Y300 to I334 is disordered.

Belongs to the HrcA family.

Its function is as follows. Negative regulator of class I heat shock genes (grpE-dnaK-dnaJ and groELS operons). Prevents heat-shock induction of these operons. In Bifidobacterium longum (strain NCC 2705), this protein is Heat-inducible transcription repressor HrcA.